A 220-amino-acid polypeptide reads, in one-letter code: MRIILLGAPGAGKGTQSNYISKSLAIPQISTGDMLRAAVKAGTPLGLKAKEVMDGGNLVSDDIIMDIIKERLLEHDCKEGCLFDGFPRTIAQAESLDRQGIDIDHVIEIHVDDREIIDRMSGRRVHPASGRTYHIRFNPPQTAGMDDETGEPLVQRADDTEETVKKRLEIYHDQTAPLIEYYSRRAAGAGTGAFAPRYTRIEGTGSVEEIRDRILEALRG.

Residue 10–15 (GAGKGT) coordinates ATP. An NMP region spans residues 30–59 (STGDMLRAAVKAGTPLGLKAKEVMDGGNLV). Residues threonine 31, arginine 36, 57 to 59 (NLV), 85 to 88 (GFPR), and glutamine 92 contribute to the AMP site. Residues 122–159 (GRRVHPASGRTYHIRFNPPQTAGMDDETGEPLVQRADD) form an LID region. ATP contacts are provided by residues arginine 123 and 132–133 (TY). Residues arginine 156 and arginine 167 each contribute to the AMP site. Residue glycine 205 coordinates ATP.

The protein belongs to the adenylate kinase family. In terms of assembly, monomer.

It localises to the cytoplasm. It carries out the reaction AMP + ATP = 2 ADP. Its pathway is purine metabolism; AMP biosynthesis via salvage pathway; AMP from ADP: step 1/1. Its function is as follows. Catalyzes the reversible transfer of the terminal phosphate group between ATP and AMP. Plays an important role in cellular energy homeostasis and in adenine nucleotide metabolism. This Chlorobium luteolum (strain DSM 273 / BCRC 81028 / 2530) (Pelodictyon luteolum) protein is Adenylate kinase.